We begin with the raw amino-acid sequence, 116 residues long: uncharacterized protein (116 aa).

Disordered stretches follow at residues 1–26 (MLLT…KSSN) and 74–116 (ENDL…KSSI). Over residues 14-26 (SANSTDDSSKSSN) the composition is skewed to low complexity. A compositionally biased stretch (basic and acidic residues) spans 74–86 (ENDLKRSKSQGRE). Residues 104 to 116 (NTASEIQRTKSSI) show a composition bias toward polar residues.

This is an uncharacterized protein from Saccharomyces cerevisiae (strain ATCC 204508 / S288c) (Baker's yeast).